The following is a 455-amino-acid chain: L-serine dehydratase 2 (455 aa).

It belongs to the iron-sulfur dependent L-serine dehydratase family. It depends on [4Fe-4S] cluster as a cofactor. In terms of processing, activated by post-translational modification by a system involving at least three gene products. Activation is mimicked in vitro by iron and dithiothreitol. There is considerable evidence for a free-radical activation mechanism.

The enzyme catalyses L-serine = pyruvate + NH4(+). The protein operates within carbohydrate biosynthesis; gluconeogenesis. Also deaminates threonine, particularly when it is present in high concentration. The protein is L-serine dehydratase 2 (sdaB) of Escherichia coli (strain K12).